The sequence spans 587 residues: Proteasome-associated ATPase (587 aa).

Residues 9 to 94 (ARKAQHDAEI…KEEVDRLAQP (86 aa)) adopt a coiled-coil conformation. 276–281 (GCGKTL) contacts ATP. The segment at 586 to 587 (YL) is docks into pockets in the proteasome alpha-ring.

It belongs to the AAA ATPase family. Homohexamer. Assembles into a hexameric ring structure that caps the 20S proteasome core. Strongly interacts with the prokaryotic ubiquitin-like protein Pup through a hydrophobic interface; the interacting region of ARC lies in its N-terminal coiled-coil domain. There is one Pup binding site per ARC hexamer ring. Upon ATP-binding, the C-terminus of ARC interacts with the alpha-rings of the proteasome core, possibly by binding to the intersubunit pockets.

The protein operates within protein degradation; proteasomal Pup-dependent pathway. In terms of biological role, ATPase which is responsible for recognizing, binding, unfolding and translocation of pupylated proteins into the bacterial 20S proteasome core particle. May be essential for opening the gate of the 20S proteasome via an interaction with its C-terminus, thereby allowing substrate entry and access to the site of proteolysis. Thus, the C-termini of the proteasomal ATPase may function like a 'key in a lock' to induce gate opening and therefore regulate proteolysis. The chain is Proteasome-associated ATPase from Thermomonospora curvata (strain ATCC 19995 / DSM 43183 / JCM 3096 / KCTC 9072 / NBRC 15933 / NCIMB 10081 / Henssen B9).